A 617-amino-acid chain; its full sequence is Proline--tRNA ligase (617 aa).

This sequence belongs to the class-II aminoacyl-tRNA synthetase family. ProS type 1 subfamily. In terms of assembly, homodimer.

It localises to the cytoplasm. It catalyses the reaction tRNA(Pro) + L-proline + ATP = L-prolyl-tRNA(Pro) + AMP + diphosphate. Functionally, catalyzes the attachment of proline to tRNA(Pro) in a two-step reaction: proline is first activated by ATP to form Pro-AMP and then transferred to the acceptor end of tRNA(Pro). As ProRS can inadvertently accommodate and process non-cognate amino acids such as alanine and cysteine, to avoid such errors it has two additional distinct editing activities against alanine. One activity is designated as 'pretransfer' editing and involves the tRNA(Pro)-independent hydrolysis of activated Ala-AMP. The other activity is designated 'posttransfer' editing and involves deacylation of mischarged Ala-tRNA(Pro). The misacylated Cys-tRNA(Pro) is not edited by ProRS. The chain is Proline--tRNA ligase from Streptococcus pneumoniae (strain ATCC 700669 / Spain 23F-1).